The following is a 185-amino-acid chain: Ribosome-recycling factor (185 aa).

This sequence belongs to the RRF family.

Its subcellular location is the cytoplasm. In terms of biological role, responsible for the release of ribosomes from messenger RNA at the termination of protein biosynthesis. May increase the efficiency of translation by recycling ribosomes from one round of translation to another. This Chromohalobacter salexigens (strain ATCC BAA-138 / DSM 3043 / CIP 106854 / NCIMB 13768 / 1H11) protein is Ribosome-recycling factor.